The sequence spans 120 residues: Large ribosomal subunit protein uL18 (120 aa).

This sequence belongs to the universal ribosomal protein uL18 family. In terms of assembly, part of the 50S ribosomal subunit; part of the 5S rRNA/L5/L18/L25 subcomplex. Contacts the 5S and 23S rRNAs.

Functionally, this is one of the proteins that bind and probably mediate the attachment of the 5S RNA into the large ribosomal subunit, where it forms part of the central protuberance. The protein is Large ribosomal subunit protein uL18 of Methylobacterium sp. (strain 4-46).